Here is a 782-residue protein sequence, read N- to C-terminus: E3 ubiquitin-protein ligase SopA (782 aa).

The segment at 137–171 (VSVSANNRPTVSEGRTPPVSPSLSLQATSSPSSPA) is disordered. Residues 157 to 171 (PSLSLQATSSPSSPA) show a composition bias toward low complexity. The active-site Glycyl thioester intermediate is C753.

The protein belongs to the SopA E3 ligase family. Post-translationally, ubiquitinated in the presence of host E1 ubiquitin-activating enzyme, E2 ubiquitin-conjugating enzyme and ubiquitin.

It is found in the secreted. It localises to the host cell. It catalyses the reaction S-ubiquitinyl-[E2 ubiquitin-conjugating enzyme]-L-cysteine + [acceptor protein]-L-lysine = [E2 ubiquitin-conjugating enzyme]-L-cysteine + N(6)-ubiquitinyl-[acceptor protein]-L-lysine.. In terms of biological role, effector proteins function to alter host cell physiology and promote bacterial survival in host tissues. This protein is an E3 ubiquitin ligase that interferes with host's ubiquitination pathway. The chain is E3 ubiquitin-protein ligase SopA (sopA) from Salmonella newport (strain SL254).